Reading from the N-terminus, the 380-residue chain is Adaptive-response sensory kinase SasA (380 aa).

The tract at residues 20–101 (LLFVANRPGD…QKVDYWWPRW (82 aa)) is kaiB-like domain, interacts with KaiC. The Histidine kinase domain occupies 157 to 380 (LLAHELRNPL…CFHFTLPVYS (224 aa)). Position 160 is a phosphohistidine; by autocatalysis (H160).

In terms of assembly, homotrimer with a small amount of possible homohexamer; a protein fragment of 109-380 is also a homotrimer. Interacts with KaiC, probably as 1 SasA trimer:1 KaiC homohexamer; unphosphorylated SasA has the highest affinity. Homodimer. Binds to the B-loop in the CI domain of KaiC; SasA and KaiB(fs) compete to bind to the CI domain. Binds preferentially to doubly phosphorylated KaiC. Autophosphorylates, probably on His-160.

The enzyme catalyses ATP + protein L-histidine = ADP + protein N-phospho-L-histidine.. Functionally, member of the two-component regulatory system SasA/RpaA involved in genome-wide circadian gene expression. One of several clock output pathways. Participates in the Kai clock protein complex, the main circadian regulator in cyanobacteria, via its interaction with KaiC. KaiC enhances the autophosphorylation activity of SasA, which then transfers its phosphate group to RpaA to activate it. In addition to its output function, recruits fold-shifted KaiB (KaiB(fs)) to KaiC to cooperatively form the KaiB(6):KaiC(6) complex (independent of SasA kinase activity). Required for robustness of the circadian rhythm of gene expression and is involved in clock output, also required for adaptation to light/dark cycles. This Thermosynechococcus vestitus (strain NIES-2133 / IAM M-273 / BP-1) protein is Adaptive-response sensory kinase SasA.